The chain runs to 444 residues: Alpha-N-acetylgalactosaminidase (444 aa).

Residues 30–31 (LR), Asp52, Asn80, 101–104 (WEWH), His107, 121–122 (EV), and Asn150 each bind NAD(+). Residue Tyr179 participates in substrate binding. Residue 208–212 (SEAKW) coordinates NAD(+). Substrate contacts are provided by residues Arg213, 225-228 (YPTH), and Tyr307. Tyr225 serves as a coordination point for NAD(+).

This sequence belongs to the Gfo/Idh/MocA family. Glycosyl hydrolase 109 subfamily. The cofactor is NAD(+).

It carries out the reaction Cleavage of non-reducing alpha-(1-&gt;3)-N-acetylgalactosamine residues from human blood group A and AB mucin glycoproteins, Forssman hapten and blood group A lacto series glycolipids.. In terms of biological role, glycosidase that has specific alpha-N-acetylgalactosaminidase activity. This is Alpha-N-acetylgalactosaminidase (nagA) from Elizabethkingia meningoseptica (Chryseobacterium meningosepticum).